We begin with the raw amino-acid sequence, 242 residues long: Probable 2-phosphosulfolactate phosphatase (242 aa).

It belongs to the ComB family. Mg(2+) serves as cofactor.

The enzyme catalyses (2R)-O-phospho-3-sulfolactate + H2O = (2R)-3-sulfolactate + phosphate. The sequence is that of Probable 2-phosphosulfolactate phosphatase from Parasynechococcus marenigrum (strain WH8102).